The chain runs to 119 residues: DNA-binding protein inhibitor ID-3 (119 aa).

A bHLH domain is found at 28-80 (RGKGPAAEEPLSLLDDMNHCYSRLRELVPGVPRGTQLSQVEILQRVIDYILDL).

As to quaternary structure, homodimer, and heterodimer with other HLH proteins. Interacts with COPS5 and COPS7A. Interacts with IFI204. Interacts with GATA4 and NKX2-5. Interacts with ANKRD2; both proteins cooperate in myoblast differentiation. Interacts with CLOCK and BMAL1. As to expression, expressed abundantly in lung, kidney and adrenal gland, but not in adult brain.

Its subcellular location is the nucleus. Its function is as follows. Transcriptional regulator (lacking a basic DNA binding domain) which negatively regulates the basic helix-loop-helix (bHLH) transcription factors by forming heterodimers and inhibiting their DNA binding and transcriptional activity. Implicated in regulating a variety of cellular processes, including cellular growth, senescence, differentiation, apoptosis, angiogenesis, and neoplastic transformation. Involved in myogenesis by inhibiting skeletal muscle and cardiac myocyte differentiation and promoting muscle precursor cells proliferation. Inhibits the binding of E2A-containing protein complexes to muscle creatine kinase E-box enhancer. Regulates the circadian clock by repressing the transcriptional activator activity of the CLOCK-BMAL1 heterodimer. This is DNA-binding protein inhibitor ID-3 (ID3) from Homo sapiens (Human).